A 291-amino-acid chain; its full sequence is Protease HtpX (291 aa).

Helical transmembrane passes span 4 to 24 (IALFLATNLAVMIVFSIVLNI) and 36 to 56 (LSGLLVMAVLFGFGGSLISLM). His143 provides a ligand contact to Zn(2+). The active site involves Glu144. Residue His147 participates in Zn(2+) binding. Transmembrane regions (helical) follow at residues 151 to 171 (GDMITMTLMQGVVNTFVIFLS) and 199 to 219 (FIVSTVLELAFGFLASFLTMW). Glu225 lines the Zn(2+) pocket.

The protein belongs to the peptidase M48B family. Zn(2+) is required as a cofactor.

It localises to the cell inner membrane. The sequence is that of Protease HtpX from Aliivibrio fischeri (strain ATCC 700601 / ES114) (Vibrio fischeri).